A 217-amino-acid polypeptide reads, in one-letter code: Large ribosomal subunit protein uL3 (217 aa).

A disordered region spans residues 129–161 (SRGPMSHGSKNHRAPGSTGAGTTPGRIYPGKRM). The segment covering 142–153 (APGSTGAGTTPG) has biased composition (low complexity).

The protein belongs to the universal ribosomal protein uL3 family. As to quaternary structure, part of the 50S ribosomal subunit. Forms a cluster with proteins L14 and L19.

Its function is as follows. One of the primary rRNA binding proteins, it binds directly near the 3'-end of the 23S rRNA, where it nucleates assembly of the 50S subunit. This is Large ribosomal subunit protein uL3 from Prochlorococcus marinus (strain MIT 9515).